A 237-amino-acid polypeptide reads, in one-letter code: MGLVGCVGKSSLVSMELRWARRRKSDNAASALPRSIPIYISTLKKDINLEELRNLYSLCNHSCNRLSEKDSNVEKIVDMKKLRRAISRSDVIVSVFCKPQHVDVDDAVLYSEEESLSSSLYTSEFGRQNKDDSFLGDLFQNAVPLTPSNGQLVGFGRAYSDYGLTASIHDLMVLPSLQRMGIGKLIVNRIVRLLTSRDIYDIAALCFEDERPFFKACGFGDDRMGSTTMMFTKSLEA.

The transit peptide at 1-93 (MGLVGCVGKS…RAISRSDVIV (93 aa)) directs the protein to the chloroplast. The N-acetyltransferase domain maps to 94–237 (SVFCKPQHVD…TMMFTKSLEA (144 aa)). Acetyl-CoA is bound by residues 171-173 (LMV), 179-184 (RMGIGK), 207-209 (FED), and Phe214.

Belongs to the acetyltransferase family. GNAT subfamily. Oligomer. In terms of processing, autoacetylated. Expressed in green tissues.

The protein resides in the plastid. It localises to the chloroplast. It carries out the reaction an N-terminal L-alpha-aminoacyl-[protein] + acetyl-CoA = N-terminal N(alpha)-acetyl-L-alpha-aminoacyl-[protein] + CoA + H(+). The catalysed reaction is L-lysyl-[protein] + acetyl-CoA = N(6)-acetyl-L-lysyl-[protein] + CoA + H(+). In terms of biological role, protein acetyltransferase with dual specificity triggering both N-alpha-acetylation (NTA) and epsilon-lysine acetylation (KA), possibly with a low efficiency or toward specific plastid substrates. The sequence is that of GCN5-related N-acetyltransferase 3, chloroplastic from Arabidopsis thaliana (Mouse-ear cress).